An 845-amino-acid chain; its full sequence is BLOC-2 complex member HPS5 homolog (845 aa).

The interval 239–268 is disordered; sequence PTEEDLEDAKSMEGSDDNDNDQRSSPSGVK.

The protein belongs to the HPS5 family.

In terms of biological role, has a role in the biogenesis of eye pigment granules. Eye pigment granules are specialized forms of late endosomes or lysosomes. Biogenesis of pigment granules in the eye requires molecular components required for protein delivery to lysosomes. This is BLOC-2 complex member HPS5 homolog from Aedes aegypti (Yellowfever mosquito).